Consider the following 203-residue polypeptide: Proteasome subunit beta 1 (203 aa).

Positions 1–7 (MTEKLKG) are cleaved as a propeptide — removed in mature form; by autocatalysis. T8 acts as the Nucleophile in catalysis.

It belongs to the peptidase T1B family. As to quaternary structure, the 20S proteasome core is composed of 14 alpha and 14 beta subunits that assemble into four stacked heptameric rings, resulting in a barrel-shaped structure. The two inner rings, each composed of seven catalytic beta subunits, are sandwiched by two outer rings, each composed of seven alpha subunits. The catalytic chamber with the active sites is on the inside of the barrel. Has a gated structure, the ends of the cylinder being occluded by the N-termini of the alpha-subunits. Is capped at one or both ends by the proteasome regulatory ATPase, PAN.

The protein localises to the cytoplasm. The catalysed reaction is Cleavage of peptide bonds with very broad specificity.. With respect to regulation, the formation of the proteasomal ATPase PAN-20S proteasome complex, via the docking of the C-termini of PAN into the intersubunit pockets in the alpha-rings, triggers opening of the gate for substrate entry. Interconversion between the open-gate and close-gate conformations leads to a dynamic regulation of the 20S proteasome proteolysis activity. Its function is as follows. Component of the proteasome core, a large protease complex with broad specificity involved in protein degradation. The polypeptide is Proteasome subunit beta 1 (Thermococcus kodakarensis (strain ATCC BAA-918 / JCM 12380 / KOD1) (Pyrococcus kodakaraensis (strain KOD1))).